Here is a 196-residue protein sequence, read N- to C-terminus: Small ribosomal subunit protein uS4c (196 aa).

Positions 20-39 (GLTRKTPKSGSNLKKKFHSG) are disordered. Residues 89–152 (MRLDNILFRL…RSKCLVQNSI (64 aa)) form the S4 RNA-binding domain.

The protein belongs to the universal ribosomal protein uS4 family. Part of the 30S ribosomal subunit. Contacts protein S5. The interaction surface between S4 and S5 is involved in control of translational fidelity.

The protein resides in the plastid. It is found in the chloroplast. Functionally, one of the primary rRNA binding proteins, it binds directly to 16S rRNA where it nucleates assembly of the body of the 30S subunit. With S5 and S12 plays an important role in translational accuracy. This Dendrocalamus giganteus (Giant bamboo) protein is Small ribosomal subunit protein uS4c (rps4).